The sequence spans 342 residues: Alpha-(1,3)-fucosyltransferase 7 (342 aa).

The Cytoplasmic portion of the chain corresponds to 1–11 (MQNAGLSPTPS). A helical; Signal-anchor for type II membrane protein membrane pass occupies residues 12-31 (LRALGGLAMAALLSTVWLWW). At 32-342 (RLGAAPGGAP…YQDLEGWFQA (311 aa)) the chain is on the extracellular side. C68 and C76 are joined by a disulfide. An N-linked (GlcNAc...) asparagine glycan is attached at N81. Cysteines 211 and 214 form a disulfide. N-linked (GlcNAc...) asparagine glycosylation occurs at N291. A disulfide bridge links C318 with C321.

Belongs to the glycosyltransferase 10 family. In terms of processing, N-glycosylated. As to expression, expressed in thymus, spleen, liver and lung. Highly expressed in the thymus and lower expressed in the lung.

The protein localises to the membrane. It catalyses the reaction an N-acetyl-alpha-neuraminyl-(2-&gt;3)-beta-D-galactosyl-(1-&gt;4)-N-acetyl-beta-D-glucosaminyl derivative + GDP-beta-L-fucose = an alpha-Neu5Ac-(2-&gt;3)-beta-D-Gal-(1-&gt;4)-[alpha-L-Fuc-(1-&gt;3)]-beta-D-GlcNAc derivative + GDP + H(+). The catalysed reaction is a neolactoside IV(3)-alpha-NeuAc-nLc4Cer + GDP-beta-L-fucose = a neolactoside IV(3)-alpha-NeuNAc,III(3)-alpha-Fuc-nLc4Cer + GDP + H(+). It carries out the reaction a neolactoside VI(3)-alpha-NeuNAc-nLc6Cer + GDP-beta-L-fucose = a neolactoside VI(3)-alpha-NeuAc,V(3)-alphaFuc-nLc6Cer + GDP + H(+). The enzyme catalyses an alpha-Neu5Ac-(2-&gt;3)-beta-D-Gal-(1-&gt;4)-beta-D-GlcNAc-(1-&gt;3)-beta-D-Gal-(1-&gt;4)-[alpha-L-Fuc-(1-&gt;3)]-beta-D-GlcNAc derivative + GDP-beta-L-fucose = an alpha-Neu5Ac-(2-&gt;3)-beta-D-Gal-(1-&gt;4)-[alpha-L-Fuc-(1-&gt;3)]-beta-D-GlcNAc-(1-&gt;3)-beta-D-Gal-(1-&gt;4)-[alpha-L-Fuc-(1-&gt;3)]-beta-D-GlcNAc derivative + GDP + H(+). It catalyses the reaction an alpha-Neu5Ac-(2-&gt;3)-beta-D-Gal-(1-&gt;4)-beta-D-GlcNAc6S derivative + GDP-beta-L-fucose = an alpha-Neu5Ac-(2-&gt;3)-beta-D-Gal-(1-&gt;4)-[alpha-L-Fuc-(1-&gt;3)]-beta-D-GlcNAc6S derivative + GDP + H(+). The catalysed reaction is alpha-Neu5Ac-(2-&gt;3)-beta-D-Gal-(1-&gt;4)-beta-D-GlcNAc-(1-&gt;3)-beta-D-Gal-(1-&gt;4)-D-Glc + GDP-beta-L-fucose = alpha-Neu5Ac-(2-&gt;3)-beta-D-Gal-(1-&gt;4)-[alpha-L-Fuc-(1-&gt;3)]-beta-D-GlcNAc-(1-&gt;3)-beta-D-Gal-(1-&gt;4)-D-Glc + GDP + H(+). It carries out the reaction alpha-Neu5Ac-(2-&gt;3)-beta-D-Gal-(1-&gt;4)-beta-D-GlcNAc-(1-&gt;3)-beta-D-Gal-(1-&gt;4)-[alpha-L-Fuc-(1-&gt;3)]-beta-D-GlcNAc-(1-&gt;3)-beta-D-Gal-(1-&gt;4)-beta-D-GlcNAc + GDP-beta-L-fucose = alpha-Neu5Ac-(2-&gt;3)-beta-D-Gal-(1-&gt;4)-[alpha-L-Fuc-(1-&gt;3)]-beta-D-GlcNAc-(1-&gt;3)-beta-D-Gal-(1-&gt;4)-[alpha-L-Fuc-(1-&gt;3)]-beta-D-GlcNAc-(1-&gt;3)-beta-D-Gal-(1-&gt;4)-beta-D-GlcNAc + GDP + H(+). The enzyme catalyses alpha-Neu5Ac-(2-&gt;3)-beta-D-Gal-(1-&gt;4)-beta-D-GlcNAc-(1-&gt;3)-beta-D-Gal-(1-&gt;4)-beta-D-GlcNAc-(1-&gt;3)-beta-D-Gal-(1-&gt;4)-beta-D-GlcNAc + GDP-beta-L-fucose = alpha-Neu5Ac-(2-&gt;3)-beta-D-Gal-(1-&gt;4)-[alpha-L-Fuc-(1-&gt;3)]-beta-D-GlcNAc-(1-&gt;3)-beta-D-Gal-(1-&gt;4)-beta-D-GlcNAc-(1-&gt;3)-beta-D-Gal-(1-&gt;4)-beta-D-GlcNAc + GDP + H(+). It participates in protein modification; protein glycosylation. Its activity is regulated as follows. Inhibited by NaCl. Inhibited by GDP in a concentration dependent manner, with an IC(50) value of 93 uM. Also inhibited by GMP and GTP. Inhibited by N-ethylmaleimide. Activated by poly(ethylene glycol) by enhancing the thermal stability of FUT7. Activated by Mn2+, Ca2+, and Mg2+. Both panosialin A and B inhibit activity with IC(50) values of 4.8 and 5.3 ug/ml, respectively. Inhibited by gallic acid (GA) and (-)-epigallocatechin gallate (EGCG) in a time-dependent and irreversible manner with IC(50) values of 60 and 700 nM, respectively. In terms of biological role, catalyzes the transfer of L-fucose, from a guanosine diphosphate-beta-L-fucose, to the N-acetyl glucosamine (GlcNAc) of a distal alpha2,3 sialylated lactosamine unit of a glycoprotein or a glycolipid-linked sialopolylactosamines chain through an alpha-1,3 glycosidic linkage and participates in the final fucosylation step in the biosynthesis of the sialyl Lewis X (sLe(x)), a carbohydrate involved in cell and matrix adhesion during leukocyte trafficking and fertilization. In vitro, also synthesizes sialyl-dimeric-Lex structures, from VIM-2 structures and both di-fucosylated and trifucosylated structures from mono-fucosylated precursors. However does not catalyze alpha 1-3 fucosylation when an internal alpha 1-3 fucosylation is present in polylactosamine chain and the fucosylation rate of the internal GlcNAc residues is reduced once fucose has been added to the distal GlcNAc. Also catalyzes the transfer of a fucose from GDP-beta-fucose to the 6-sulfated a(2,3)sialylated substrate to produce 6-sulfo sLex mediating significant L-selectin-dependent cell adhesion. Through sialyl-Lewis(x) biosynthesis, can control SELE- and SELP-mediated cell adhesion with leukocytes and allows leukocytes tethering and rolling along the endothelial tissue thereby enabling the leukocytes to accumulate at a site of inflammation. May enhance embryo implantation through sialyl Lewis X (sLeX)-mediated adhesion of embryo cells to endometrium. May affect insulin signaling by up-regulating the phosphorylation and expression of some signaling molecules involved in the insulin-signaling pathway through SLe(x) which is present on the glycans of the INSRR alpha subunit. The protein is Alpha-(1,3)-fucosyltransferase 7 of Bos taurus (Bovine).